The following is a 128-amino-acid chain: Small ribosomal subunit protein bS6 (128 aa).

The protein belongs to the bacterial ribosomal protein bS6 family.

In terms of biological role, binds together with bS18 to 16S ribosomal RNA. This chain is Small ribosomal subunit protein bS6, found in Geotalea uraniireducens (strain Rf4) (Geobacter uraniireducens).